We begin with the raw amino-acid sequence, 307 residues long: Ribonuclease Z (307 aa).

Zn(2+)-binding residues include histidine 63, histidine 65, aspartate 67, histidine 68, histidine 143, aspartate 213, and histidine 271. The Proton acceptor role is filled by aspartate 67.

Belongs to the RNase Z family. As to quaternary structure, homodimer. Zn(2+) is required as a cofactor.

It carries out the reaction Endonucleolytic cleavage of RNA, removing extra 3' nucleotides from tRNA precursor, generating 3' termini of tRNAs. A 3'-hydroxy group is left at the tRNA terminus and a 5'-phosphoryl group is left at the trailer molecule.. Functionally, zinc phosphodiesterase, which displays some tRNA 3'-processing endonuclease activity. Probably involved in tRNA maturation, by removing a 3'-trailer from precursor tRNA. The protein is Ribonuclease Z of Lactococcus lactis subsp. cremoris (strain SK11).